Here is a 229-residue protein sequence, read N- to C-terminus: Uracil-DNA glycosylase (229 aa).

D64 functions as the Proton acceptor in the catalytic mechanism.

The protein belongs to the uracil-DNA glycosylase (UDG) superfamily. UNG family.

The protein resides in the cytoplasm. It catalyses the reaction Hydrolyzes single-stranded DNA or mismatched double-stranded DNA and polynucleotides, releasing free uracil.. Its function is as follows. Excises uracil residues from the DNA which can arise as a result of misincorporation of dUMP residues by DNA polymerase or due to deamination of cytosine. The polypeptide is Uracil-DNA glycosylase (Salmonella choleraesuis (strain SC-B67)).